The chain runs to 200 residues: Large ribosomal subunit protein bL25 (200 aa).

Belongs to the bacterial ribosomal protein bL25 family. CTC subfamily. Part of the 50S ribosomal subunit; part of the 5S rRNA/L5/L18/L25 subcomplex. Contacts the 5S rRNA. Binds to the 5S rRNA independently of L5 and L18.

Functionally, this is one of the proteins that binds to the 5S RNA in the ribosome where it forms part of the central protuberance. This Nocardia farcinica (strain IFM 10152) protein is Large ribosomal subunit protein bL25.